The chain runs to 203 residues: MMQDVSSSPVSPADDSLSNSEEEPDRQQPPSGKRGGRKRRSSRRSAGGGAGPGGAASGGAGGGDEPGSPAQGKRGKKSAGCGGGGGGGAGGGGSSSGGGSPQSCEELQTQRVMANVRERQRTQSLNEPFAALRKIIPTLPSDKLSKIQTLKLAARYIDFLYRVLQSDELDSKTASCSYVAHEWLSYAFSVWRMEGAWSMSASH.

Over residues methionine 1–serine 18 the composition is skewed to low complexity. The interval methionine 1–leucine 107 is disordered. Positions arginine 34–arginine 43 are enriched in basic residues. 2 stretches are compositionally biased toward gly residues: residues alanine 46–glutamate 65 and glycine 80–serine 100. Residues threonine 109–leucine 160 enclose the bHLH domain. The interval arginine 162–arginine 192 is sufficient for transactivation activity.

Efficient DNA binding requires dimerization with another bHLH protein. Homodimer or heterodimer with E proteins such as TCF3. ID1 binds preferentially to TCF3 but does not interact efficiently with TWIST1 so ID1 levels control the amount of TCF3 available to dimerize with TWIST and thus determine the type of dimer formed.

Its subcellular location is the nucleus. Its function is as follows. Acts as a transcriptional regulator. Inhibits myogenesis by sequestrating E proteins, inhibiting trans-activation by MEF2, and inhibiting DNA-binding by MYOD1 through physical interaction. This interaction probably involves the basic domains of both proteins. Also represses expression of pro-inflammatory cytokines such as TNFA and IL1B. Regulates cranial suture patterning and fusion. Activates transcription as a heterodimer with E proteins. Regulates gene expression differentially, depending on dimer composition. Homodimers induce expression of FGFR2 and POSTN while heterodimers repress FGFR2 and POSTN expression and induce THBS1 expression. Heterodimerization is also required for osteoblast differentiation. Represses the activity of the circadian transcriptional activator: NPAS2-BMAL1 heterodimer. In Gorilla gorilla gorilla (Western lowland gorilla), this protein is Twist-related protein 1 (TWIST1).